A 531-amino-acid chain; its full sequence is Transporter mfs1 (531 aa).

10 helical membrane-spanning segments follow: residues 83–103 (LVVTFDVCFLTFAVYMGSAIF), 119–139 (VPVILGLTLFVEGYAVGPLIF), 158–178 (LIVFICLQIPTALGSSLGVLL), 182–202 (FLAGVFGSPALSTGGASLADI), 214–234 (FWSLGAVGGPVLGPLLGAAMV), 241–261 (WQFWLLMMISALVLVIITFFM), 325–345 (IYIGLVYSILYLWFEAFPILF), 358–378 (LVYMGILVGSVLTVAFYFIYL), 398–418 (ILIISFPAAFFIPISLFWFGW), and 424–444 (VHWIVPIVGTLFYASGSFLLF). Residue Asn486 is glycosylated (N-linked (GlcNAc...) asparagine). Residues 496 to 516 (GWGSTILGVISCIMIPIPFLI) traverse the membrane as a helical segment.

The protein belongs to the major facilitator superfamily. CAR1 family.

The protein resides in the endoplasmic reticulum. It is found in the membrane. The chain is Transporter mfs1 (mfs1) from Schizosaccharomyces pombe (strain 972 / ATCC 24843) (Fission yeast).